Consider the following 393-residue polypeptide: NAD(P)H-quinone oxidoreductase subunit H, chloroplastic (393 aa).

Belongs to the complex I 49 kDa subunit family. In terms of assembly, NDH is composed of at least 16 different subunits, 5 of which are encoded in the nucleus. Interacts with the chaperonin CNP60B4 subunit.

The protein resides in the plastid. Its subcellular location is the chloroplast thylakoid membrane. It catalyses the reaction a plastoquinone + NADH + (n+1) H(+)(in) = a plastoquinol + NAD(+) + n H(+)(out). The catalysed reaction is a plastoquinone + NADPH + (n+1) H(+)(in) = a plastoquinol + NADP(+) + n H(+)(out). Functionally, NDH shuttles electrons from NAD(P)H:plastoquinone, via FMN and iron-sulfur (Fe-S) centers, to quinones in the photosynthetic chain and possibly in a chloroplast respiratory chain. The immediate electron acceptor for the enzyme in this species is believed to be plastoquinone. Couples the redox reaction to proton translocation, and thus conserves the redox energy in a proton gradient. The protein is NAD(P)H-quinone oxidoreductase subunit H, chloroplastic of Arabidopsis thaliana (Mouse-ear cress).